The primary structure comprises 77 residues: Acyl carrier protein (77 aa).

A Carrier domain is found at 2–77; that stretch reads AEVLEKVTKI…DAVKYIEANA (76 aa). Position 37 is an O-(pantetheine 4'-phosphoryl)serine (Ser-37).

The protein belongs to the acyl carrier protein (ACP) family. Post-translationally, 4'-phosphopantetheine is transferred from CoA to a specific serine of apo-ACP by AcpS. This modification is essential for activity because fatty acids are bound in thioester linkage to the sulfhydryl of the prosthetic group.

The protein localises to the cytoplasm. Its pathway is lipid metabolism; fatty acid biosynthesis. Its function is as follows. Carrier of the growing fatty acid chain in fatty acid biosynthesis. The protein is Acyl carrier protein of Listeria innocua serovar 6a (strain ATCC BAA-680 / CLIP 11262).